The following is a 421-amino-acid chain: Imidazolonepropionase (421 aa).

Histidine 80 and histidine 82 together coordinate Fe(3+). Zn(2+)-binding residues include histidine 80 and histidine 82. Positions 89, 152, and 185 each coordinate 4-imidazolone-5-propanoate. Tyrosine 152 lines the N-formimidoyl-L-glutamate pocket. Histidine 249 lines the Fe(3+) pocket. Histidine 249 serves as a coordination point for Zn(2+). Glutamate 252 contributes to the 4-imidazolone-5-propanoate binding site. Aspartate 324 serves as a coordination point for Fe(3+). A Zn(2+)-binding site is contributed by aspartate 324. The N-formimidoyl-L-glutamate site is built by asparagine 326 and glycine 328. Residue serine 329 coordinates 4-imidazolone-5-propanoate.

This sequence belongs to the metallo-dependent hydrolases superfamily. HutI family. In terms of assembly, homodimer. Requires Zn(2+) as cofactor. It depends on Fe(3+) as a cofactor.

It is found in the cytoplasm. The enzyme catalyses 4-imidazolone-5-propanoate + H2O = N-formimidoyl-L-glutamate. The protein operates within amino-acid degradation; L-histidine degradation into L-glutamate; N-formimidoyl-L-glutamate from L-histidine: step 3/3. Functionally, catalyzes the hydrolytic cleavage of the carbon-nitrogen bond in imidazolone-5-propanoate to yield N-formimidoyl-L-glutamate. It is the third step in the universal histidine degradation pathway. This is Imidazolonepropionase from Bacillus subtilis (strain 168).